Here is a 406-residue protein sequence, read N- to C-terminus: Leu/Ile/Val-binding protein homolog 5 (406 aa).

Positions 1–29 (MIGTRLPAWTRVLACGVAGLSLMTISAKA) are cleaved as a signal peptide.

It belongs to the leucine-binding protein family.

Component of an amino-acid transport system. In Brucella suis biovar 1 (strain 1330), this protein is Leu/Ile/Val-binding protein homolog 5.